The chain runs to 200 residues: MEQNHGLLIVLSGPSGAGKGTLCQELLRQLPQVKYSVSATTRQPRPGEMDGLHYYFRSREEFQTMIEQDQLLEWAEFCGNYYGTPQFAVEQAIQAGNDVILEIEIQGALQVKQRFPQGVFIFVVPPSMDELSQRIHKRGTESEEVIQKRLQTAARELEYVSEYDYVVVNDEIPLAVDKLKSILLAEKCRVKRKPYVFQGV.

The 179-residue stretch at 6–184 folds into the Guanylate kinase-like domain; sequence GLLIVLSGPS…AVDKLKSILL (179 aa). Residue 13–20 coordinates ATP; the sequence is GPSGAGKG.

It belongs to the guanylate kinase family.

The protein resides in the cytoplasm. It catalyses the reaction GMP + ATP = GDP + ADP. In terms of biological role, essential for recycling GMP and indirectly, cGMP. This Desulfitobacterium hafniense (strain Y51) protein is Guanylate kinase.